Here is a 440-residue protein sequence, read N- to C-terminus: Thymidine phosphorylase (440 aa).

Belongs to the thymidine/pyrimidine-nucleoside phosphorylase family. Homodimer.

It catalyses the reaction thymidine + phosphate = 2-deoxy-alpha-D-ribose 1-phosphate + thymine. It participates in pyrimidine metabolism; dTMP biosynthesis via salvage pathway; dTMP from thymine: step 1/2. The enzymes which catalyze the reversible phosphorolysis of pyrimidine nucleosides are involved in the degradation of these compounds and in their utilization as carbon and energy sources, or in the rescue of pyrimidine bases for nucleotide synthesis. This Erwinia tasmaniensis (strain DSM 17950 / CFBP 7177 / CIP 109463 / NCPPB 4357 / Et1/99) protein is Thymidine phosphorylase.